The sequence spans 962 residues: Glycine dehydrogenase (decarboxylating) (962 aa).

Lysine 709 is modified (N6-(pyridoxal phosphate)lysine).

It belongs to the GcvP family. As to quaternary structure, the glycine cleavage system is composed of four proteins: P, T, L and H. Pyridoxal 5'-phosphate is required as a cofactor.

The enzyme catalyses N(6)-[(R)-lipoyl]-L-lysyl-[glycine-cleavage complex H protein] + glycine + H(+) = N(6)-[(R)-S(8)-aminomethyldihydrolipoyl]-L-lysyl-[glycine-cleavage complex H protein] + CO2. Functionally, the glycine cleavage system catalyzes the degradation of glycine. The P protein binds the alpha-amino group of glycine through its pyridoxal phosphate cofactor; CO(2) is released and the remaining methylamine moiety is then transferred to the lipoamide cofactor of the H protein. This is Glycine dehydrogenase (decarboxylating) from Shewanella sp. (strain ANA-3).